The chain runs to 358 residues: Protein Wnt-8 (358 aa).

Residues M1–S22 form the signal peptide. C55 and C66 are disulfide-bonded. An N-linked (GlcNAc...) asparagine glycan is attached at N104. 10 cysteine pairs are disulfide-bonded: C105-C113, C115-C133, C181-C195, C183-C190, C260-C298, C276-C291, C295-C337, C313-C328, C315-C325, and C320-C321. Residue S187 is the site of O-palmitoleoyl serine attachment. 2 N-linked (GlcNAc...) asparagine glycosylation sites follow: N263 and N282.

This sequence belongs to the Wnt family. In terms of assembly, homooligomer; disulfide-linked, leading to inactivation. Interacts with the long chain of cer1. Palmitoleoylation is required for efficient binding to frizzled receptors. Depalmitoleoylation leads to Wnt signaling pathway inhibition. In terms of processing, proteolytic processing by tiki1 and tiki2 promotes oxidation and formation of large disulfide-bond oligomers, leading to inactivation of wnt8.

Its subcellular location is the secreted. The protein resides in the extracellular space. It is found in the extracellular matrix. Ligand for members of the frizzled family of seven transmembrane receptors. Plays a role in ventral mesodermal patterning during embryogenesis. Mimics Nieuwkoop center activity. Causes dorsal mesodermal differentiation of animal cap ectoderm when coexpressed with noggin and nuclear, sequence-specific DNA-binding protein xBra. None of these molecules causes dorsal mesoderm formation when expressed alone. The protein is Protein Wnt-8 (wnt8) of Xenopus laevis (African clawed frog).